Here is a 561-residue protein sequence, read N- to C-terminus: Putative ABC transporter ATP-binding protein SAV_5847 (561 aa).

Positions 2–243 constitute an ABC transporter 1 domain; sequence IRFEDVSVTY…SPVYPPVVDL (242 aa). 36–43 provides a ligand contact to ATP; the sequence is GPSGVGKS. Positions 268–299 are disordered; the sequence is ERLAATETPTPTATATATAAPAPSPSRPRRPR. Low complexity predominate over residues 272–288; the sequence is ATETPTPTATATATAAP. The ABC transporter 2 domain occupies 315-543; the sequence is AAVEALAVRR…SPSFAPQVTK (229 aa). 347-354 serves as a coordination point for ATP; sequence GRNGAGKS.

It belongs to the ABC transporter superfamily.

The protein resides in the cell membrane. Probably part of an ABC transporter complex. Responsible for energy coupling to the transport system. The chain is Putative ABC transporter ATP-binding protein SAV_5847 from Streptomyces avermitilis (strain ATCC 31267 / DSM 46492 / JCM 5070 / NBRC 14893 / NCIMB 12804 / NRRL 8165 / MA-4680).